The following is a 426-amino-acid chain: MAVQAALLSTHPFVPFGFGGSPDGLGGAFGALDKGCCFEDDETGAPAGALLSGAEGGDVREATRDLLSFIDSASSNIKLALDKPGKSKRKVNHRKYLQKQIKRCSGLMGAAPPGPPSPSAADTPAKRPLAAPSAPTVAAPAHGKAAPRREASQAAAAASLQSRSLAALFDSLRHVPGGAEPAGGEVAAPAAGLGGAGTGGAGGDVAGPAGATAIPGARKVPLRARNLPPSFFTEPSRAGGGGCGPSGPDVSLGDLEKGAEAVEFFELLGPDYGAGTEAAVLLAAEPLDVFPAGASVLRGPPELEPGLFEPPPAVVGNLLYPEPWSVPGCSPTKKSPLTAPRGGLTLNEPLSPLYPAAADSPGGEDGRGHLASFAPFFPDCALPPPPPPHQVSYDYSAGYSRTAYSSLWRSDGVWEGAPGEEGAHRD.

Disordered stretches follow at residues 106 to 157 (GLMG…AAAA) and 226 to 246 (NLPP…CGPS). Over residues 128-141 (PLAAPSAPTVAAPA) the composition is skewed to low complexity.

Belongs to the FAM181 family.

The protein is Protein FAM181B (FAM181B) of Homo sapiens (Human).